The sequence spans 3625 residues: Cubilin (3625 aa).

A signal peptide spans 1-20; sequence MVNNMSLLFLWSLVIFLTFA. Positions 21–36 are cleaved as a propeptide — removed in mature form; the sequence is ESYGEAGGPELQRHKR. An interaction with AMN region spans residues 43–50; it reads PRMAAERG. Asn-106 carries N-linked (GlcNAc...) asparagine glycosylation. Residues 133–169 enclose the EGF-like 1 domain; it reads DGKVCSSNPCQNGATCLNLHDSFFCICPSQWKGPLCS. 6 disulfide bridges follow: Cys-137-Cys-148, Cys-142-Cys-157, Cys-159-Cys-168, Cys-175-Cys-191, Cys-185-Cys-200, and Cys-202-Cys-211. One can recognise an EGF-like 2; calcium-binding domain in the interval 171-212; sequence DVNECEIYSGTPLGCQNGATCINTPGSYSCLCSPETHGPQCA. Residue Asn-257 is glycosylated (N-linked (GlcNAc...) asparagine). The EGF-like 3; calcium-binding domain maps to 264–305; the sequence is DRDECSSWPAPCSALVPCFNTLGSFYCGACPTGWQGNGYICE. Disulfide bonds link Cys-268–Cys-281, Cys-275–Cys-290, Cys-293–Cys-304, Cys-310–Cys-325, Cys-317–Cys-334, Cys-337–Cys-348, Cys-354–Cys-367, Cys-361–Cys-377, Cys-379–Cys-393, Cys-400–Cys-410, Cys-405–Cys-419, Cys-421–Cys-430, Cys-437–Cys-448, Cys-442–Cys-457, Cys-459–Cys-468, Cys-475–Cys-501, Cys-528–Cys-550, Cys-591–Cys-617, Cys-644–Cys-666, and Cys-709–Cys-734. In terms of domain architecture, EGF-like 4; calcium-binding spans 306-349; it reads DINECEINNGGCSVAPPVECVNTPGSYYCPSCPPGYQGDGRMCT. 2 EGF-like domains span residues 350-394 and 396-431; these read LIDL…HGCV and LSNVCLTRPCLHGQCMETASGYVCNCDSGWAGMNCT. An N-linked (GlcNAc...) asparagine glycan is attached at Asn-429. One can recognise an EGF-like 7; calcium-binding domain in the interval 433–469; the sequence is NINECLSNPCLNGGTCVDGINAFSCECTRFWTGSLCH. 27 consecutive CUB domains span residues 475 to 587, 591 to 703, 709 to 816, 817 to 928, 932 to 1042, 1045 to 1163, 1167 to 1279, 1280 to 1391, 1393 to 1508, 1512 to 1621, 1622 to 1736, 1740 to 1852, 1854 to 1965, 1980 to 2093, 2094 to 2215, 2219 to 2336, 2338 to 2450, 2454 to 2567, 2572 to 2689, 2691 to 2803, 2807 to 2921, 2922 to 3037, 3039 to 3152, 3159 to 3276, 3280 to 3397, 3397 to 3509, and 3513 to 3625; these read CGGT…WETR, CGGV…YLTT, CGGN…YQVA, CGGE…FSTE, CGEI…YEAT, SAGN…WDGS, CGGN…YQQT, CDNV…WLVH, CGGE…WRAV, CGGI…FRQA, CGGH…YVAS, CGGI…FNNI, GNDH…WFAM, CGGF…FHKS, CGGY…YEAK, CGGN…YSIA, CGGT…FDSS, CGGD…YTSS, CGGS…YSFT, CGGI…WNTE, CGGI…FLSR, CGRN…YRIT, CGGT…FRET, CGGY…YTLL, CGGT…IAGC, CSRE…WTSS, and CGGT…TWAS. Residues Asn-712 and Asn-749 are each glycosylated (N-linked (GlcNAc...) asparagine). A disulfide bridge links Cys-761 with Cys-779. A glycan (N-linked (GlcNAc...) asparagine) is linked at Asn-781. A disulfide bridge links Cys-817 with Cys-842. The N-linked (GlcNAc...) asparagine glycan is linked to Asn-857. 2 cysteine pairs are disulfide-bonded: Cys-869–Cys-891 and Cys-932–Cys-958. An N-linked (GlcNAc...) asparagine glycan is attached at Asn-957. Ca(2+) is bound at residue Glu-980. An N-linked (GlcNAc...) asparagine glycan is attached at Asn-984. Cys-985 and Cys-1005 are disulfide-bonded. The Ca(2+) site is built by Asp-988, Asp-1027, Asp-1029, and Leu-1030. Asn-1048 carries an N-linked (GlcNAc...) asparagine glycan. Positions 1097, 1107, and 1148 each coordinate Ca(2+). The cysteines at positions 1104 and 1126 are disulfide-linked. Cysteines 1167 and 1193 form a disulfide. Asn-1170 carries N-linked (GlcNAc...) asparagine glycosylation. Residue Glu-1215 coordinates Ca(2+). An N-linked (GlcNAc...) asparagine glycan is attached at Asn-1219. Cys-1220 and Cys-1242 form a disulfide bridge. Ca(2+) contacts are provided by Asp-1223, Asp-1264, Gly-1266, and Gln-1267. Residues Cys-1280 and Cys-1308 are joined by a disulfide bond. N-linked (GlcNAc...) asparagine glycosylation is found at Asn-1287, Asn-1309, and Asn-1321. Position 1330 (Glu-1330) interacts with Ca(2+). An N-linked (GlcNAc...) asparagine glycan is attached at Asn-1334. A disulfide bridge links Cys-1335 with Cys-1353. Asp-1338, Asp-1375, and Val-1377 together coordinate Ca(2+). 2 cysteine pairs are disulfide-bonded: Cys-1393/Cys-1419 and Cys-1446/Cys-1468. An N-linked (GlcNAc...) asparagine glycan is attached at Asn-1502. A disulfide bridge connects residues Cys-1512 and Cys-1538. A glycan (N-linked (GlcNAc...) asparagine) is linked at Asn-1553. Disulfide bonds link Cys-1565-Cys-1583, Cys-1622-Cys-1649, Cys-1677-Cys-1699, Cys-1740-Cys-1766, and Cys-1793-Cys-1814. An N-linked (GlcNAc...) asparagine glycan is attached at Asn-1648. Asn-1804, Asn-1821, and Asn-1887 each carry an N-linked (GlcNAc...) asparagine glycan. Intrachain disulfides connect Cys-1907–Cys-1929, Cys-1980–Cys-2008, and Cys-2034–Cys-2056. N-linked (GlcNAc...) asparagine glycans are attached at residues Asn-2087 and Asn-2119. 2 cysteine pairs are disulfide-bonded: Cys-2094–Cys-2120 and Cys-2219–Cys-2249. N-linked (GlcNAc...) asparagine glycosylation occurs at Asn-2276. Intrachain disulfides connect Cys-2277-Cys-2299 and Cys-2338-Cys-2365. N-linked (GlcNAc...) asparagine glycans are attached at residues Asn-2388 and Asn-2402. Intrachain disulfides connect Cys-2392-Cys-2413, Cys-2454-Cys-2480, and Cys-2507-Cys-2529. Residues Asn-2533, Asn-2583, Asn-2594, and Asn-2612 are each glycosylated (N-linked (GlcNAc...) asparagine). An intrachain disulfide couples Cys-2572 to Cys-2601. 5 cysteine pairs are disulfide-bonded: Cys-2630-Cys-2651, Cys-2691-Cys-2717, Cys-2744-Cys-2766, Cys-2807-Cys-2833, and Cys-2862-Cys-2885. Residues Asn-2887, Asn-2925, Asn-2928, and Asn-2947 are each glycosylated (N-linked (GlcNAc...) asparagine). Intrachain disulfides connect Cys-2922/Cys-2948 and Cys-2979/Cys-3001. Thr-3010 is subject to Phosphothreonine. Disulfide bonds link Cys-3039/Cys-3066 and Cys-3093/Cys-3115. 3 N-linked (GlcNAc...) asparagine glycosylation sites follow: Asn-3044, Asn-3105, and Asn-3127. 2 disulfides stabilise this stretch: Cys-3159–Cys-3187 and Cys-3217–Cys-3239. N-linked (GlcNAc...) asparagine glycosylation is found at Asn-3270 and Asn-3285. 2 disulfides stabilise this stretch: Cys-3280/Cys-3308 and Cys-3334/Cys-3356. Asn-3359 carries N-linked (GlcNAc...) asparagine glycosylation. A disulfide bridge links Cys-3397 with Cys-3423. 3 N-linked (GlcNAc...) asparagine glycosylation sites follow: Asn-3432, Asn-3459, and Asn-3535. Intrachain disulfides connect Cys-3450–Cys-3472, Cys-3513–Cys-3539, and Cys-3566–Cys-3588.

As to quaternary structure, interacts with AMN. Component of the cubam complex composed of one CUBN trimer and one AMN chain. The cubam complex can dimerize. Interacts with LRP2 in a dual-receptor complex in a calcium-dependent manner. Found in a complex with PID1/PCLI1, LRP1 and CUBNI. Interacts with LRP1 and PID1/PCLI1. The precursor is cleaved by a trans-Golgi proteinase furin, removing a propeptide. Post-translationally, N-glycosylated. In terms of tissue distribution, detected in kidney cortex (at protein level).

The protein localises to the apical cell membrane. It localises to the cell membrane. It is found in the membrane. The protein resides in the coated pit. Its subcellular location is the endosome. The protein localises to the lysosome membrane. In terms of biological role, endocytic receptor which plays a role in lipoprotein, vitamin and iron metabolism by facilitating their uptake. Acts together with LRP2 to mediate endocytosis of high-density lipoproteins, GC, hemoglobin, ALB, TF and SCGB1A1. Acts together with AMN to mediate endocytosis of the CBLIF-cobalamin complex. Binds to ALB, MB, Kappa and lambda-light chains, TF, hemoglobin, GC, SCGB1A1, APOA1, high density lipoprotein, and the CBLIF-cobalamin complex. Ligand binding requires calcium. Serves as important transporter in several absorptive epithelia, including intestine, renal proximal tubules and embryonic yolk sac. May play an important role in the development of the peri-implantation embryo through internalization of APOA1 and cholesterol. Binds to LGALS3 at the maternal-fetal interface. The protein is Cubilin (CUBN) of Sus scrofa (Pig).